We begin with the raw amino-acid sequence, 115 residues long: Large ribosomal subunit protein bL20 (115 aa).

Belongs to the bacterial ribosomal protein bL20 family.

Its function is as follows. Binds directly to 23S ribosomal RNA and is necessary for the in vitro assembly process of the 50S ribosomal subunit. It is not involved in the protein synthesizing functions of that subunit. The protein is Large ribosomal subunit protein bL20 of Pelodictyon phaeoclathratiforme (strain DSM 5477 / BU-1).